The following is a 326-amino-acid chain: Balbiani ring protein 1 (326 aa).

Residues 1–33 (PSKSGPRPSKSGPRPSKSGPRPSKSGPRPSKSG) show a composition bias toward low complexity. The disordered stretch occupies residues 1 to 119 (PSKSGPRPSK…RESPVCDDAM (119 aa)). Over residues 34–51 (PRPEKCGSAMRKAEAEKC) the composition is skewed to basic and acidic residues. A compositionally biased stretch (low complexity) spans 93 to 102 (VTPTPEVPTT). Basic and acidic residues predominate over residues 107–119 (SESRESPVCDDAM).

As to expression, salivary gland.

It localises to the secreted. Used by the larvae to construct a supramolecular structure, the larval tube. This chain is Balbiani ring protein 1 (BR1), found in Chironomus pallidivittatus (Midge).